The primary structure comprises 699 residues: Pollen-specific leucine-rich repeat extensin-like protein 4 (699 aa).

The signal sequence occupies residues 1-39; sequence MPFYKQPWVFSKVFVLAMAKPPSFGCCFFLLFFSFLSSS. N-linked (GlcNAc...) asparagine glycosylation is present at asparagine 106. 9 LRR repeats span residues 133–157, 158–180, 182–205, 206–229, 231–251, 253–275, 276–299, 301–323, and 324–347; these read VTVV…LGLM, TDVA…SFEK, KLMH…VLSW, PDVK…LFKK, LDAI…SLGE, PASV…IGNM, KNLN…IGKL, NVTV…FVGL, and TSVE…ICQL. An N-linked (GlcNAc...) asparagine glycan is attached at asparagine 301. Asparagine 352 is a glycosylation site (N-linked (GlcNAc...) asparagine). Residues 411–699 are disordered; sequence KCAGGSSTPS…SPPPPMFAGY (289 aa). Composition is skewed to pro residues over residues 421–466, 482–504, 518–659, and 690–699; these read KPSP…PVPT, KPSP…PQPD, PPPA…PPAP, and SPPPPMFAGY. A contains the Ser-Pro(4) repeats region spans residues 517–699; sequence SPPPAPVNSP…SPPPPMFAGY (183 aa).

Post-translationally, hydroxylated on proline residues in the S-P-P-P-P repeat. O-glycosylated on hydroxyprolines. Expressed in flowers, stamen, pollen, and pollinated carpels.

Its subcellular location is the secreted. The protein localises to the cell wall. Functionally, modulates cell morphogenesis by regulating cell wall formation and assembly, and/or growth polarization. In Arabidopsis thaliana (Mouse-ear cress), this protein is Pollen-specific leucine-rich repeat extensin-like protein 4 (PEX4).